Reading from the N-terminus, the 299-residue chain is tRNA dimethylallyltransferase (299 aa).

11-18 lines the ATP pocket; the sequence is GPTAVGKT. 13–18 contacts substrate; sequence TAVGKT. Residues 36–39 are interaction with substrate tRNA; it reads DSQQ.

Belongs to the IPP transferase family. Monomer. Mg(2+) serves as cofactor.

The enzyme catalyses adenosine(37) in tRNA + dimethylallyl diphosphate = N(6)-dimethylallyladenosine(37) in tRNA + diphosphate. Catalyzes the transfer of a dimethylallyl group onto the adenine at position 37 in tRNAs that read codons beginning with uridine, leading to the formation of N6-(dimethylallyl)adenosine (i(6)A). The polypeptide is tRNA dimethylallyltransferase (Streptococcus pyogenes serotype M4 (strain MGAS10750)).